The sequence spans 318 residues: Basic leucine zipper (bZIP) transcription factor atfB (318 aa).

Residues 114 to 157 (FNSSPPEYAPPKHRSSLSEQSQTDGYGVSTRRRKASAIDQCEQQ) are disordered. A basic motif region spans residues 160–199 (REKREKFLERNRLAASKCRQKKKEHTKLLETRFREVSNKK). In terms of domain architecture, bZIP spans 160-223 (REKREKFLER…LNLKNEMLRH (64 aa)). The interval 202–216 (LESEIEHLRSEVLNL) is leucine-zipper. A disordered region spans residues 275–301 (DGPMQLPSEMGSPLDQRRDSEQSIMTE).

It belongs to the bZIP family. ATF subfamily.

The protein resides in the nucleus. Transcription factor that acts as a key player in the regulatory circuit that integrates secondary metabolism and cellular response to oxidative stress. Regulates the genes involved in development and stress response through direct binding to their promoters. Particularly involved in the resistance to oxidative stress in asexual conidiospores. The polypeptide is Basic leucine zipper (bZIP) transcription factor atfB (Aspergillus oryzae (strain ATCC 42149 / RIB 40) (Yellow koji mold)).